The sequence spans 103 residues: Protein reprimo A (103 aa).

Residues 50 to 70 form a helical membrane-spanning segment; the sequence is IVQIAVMCVLSLTVVFGIFFL.

It belongs to the reprimo family.

Its subcellular location is the cytoplasm. The protein resides in the membrane. In terms of biological role, may be involved in the regulation of p53-dependent G2 arrest of the cell cycle. The chain is Protein reprimo A from Danio rerio (Zebrafish).